We begin with the raw amino-acid sequence, 201 residues long: Small ribosomal subunit protein uS4 (201 aa).

Residues 91-154 (SRLDNVIYRA…QKMEWFEEAQ (64 aa)) form the S4 RNA-binding domain.

This sequence belongs to the universal ribosomal protein uS4 family. In terms of assembly, part of the 30S ribosomal subunit. Contacts protein S5. The interaction surface between S4 and S5 is involved in control of translational fidelity.

Functionally, one of the primary rRNA binding proteins, it binds directly to 16S rRNA where it nucleates assembly of the body of the 30S subunit. With S5 and S12 plays an important role in translational accuracy. The sequence is that of Small ribosomal subunit protein uS4 from Corynebacterium aurimucosum (strain ATCC 700975 / DSM 44827 / CIP 107346 / CN-1) (Corynebacterium nigricans).